A 614-amino-acid polypeptide reads, in one-letter code: 1-deoxy-D-xylulose-5-phosphate synthase (614 aa).

Thiamine diphosphate contacts are provided by residues His-74 and 115–117 (GHS). Asp-146 lines the Mg(2+) pocket. Thiamine diphosphate contacts are provided by residues 147–148 (GA), Asn-175, Tyr-282, and Glu-363. Asn-175 is a binding site for Mg(2+).

It belongs to the transketolase family. DXPS subfamily. As to quaternary structure, homodimer. The cofactor is Mg(2+). Thiamine diphosphate serves as cofactor.

It catalyses the reaction D-glyceraldehyde 3-phosphate + pyruvate + H(+) = 1-deoxy-D-xylulose 5-phosphate + CO2. Its pathway is metabolic intermediate biosynthesis; 1-deoxy-D-xylulose 5-phosphate biosynthesis; 1-deoxy-D-xylulose 5-phosphate from D-glyceraldehyde 3-phosphate and pyruvate: step 1/1. In terms of biological role, catalyzes the acyloin condensation reaction between C atoms 2 and 3 of pyruvate and glyceraldehyde 3-phosphate to yield 1-deoxy-D-xylulose-5-phosphate (DXP). The sequence is that of 1-deoxy-D-xylulose-5-phosphate synthase from Methylobacillus flagellatus (strain ATCC 51484 / DSM 6875 / VKM B-1610 / KT).